Consider the following 244-residue polypeptide: 1-(5-phosphoribosyl)-5-[(5-phosphoribosylamino)methylideneamino] imidazole-4-carboxamide isomerase (244 aa).

The active-site Proton acceptor is the aspartate 12. The active-site Proton donor is the aspartate 131.

This sequence belongs to the HisA/HisF family.

It localises to the cytoplasm. It carries out the reaction 1-(5-phospho-beta-D-ribosyl)-5-[(5-phospho-beta-D-ribosylamino)methylideneamino]imidazole-4-carboxamide = 5-[(5-phospho-1-deoxy-D-ribulos-1-ylimino)methylamino]-1-(5-phospho-beta-D-ribosyl)imidazole-4-carboxamide. Its pathway is amino-acid biosynthesis; L-histidine biosynthesis; L-histidine from 5-phospho-alpha-D-ribose 1-diphosphate: step 4/9. The chain is 1-(5-phosphoribosyl)-5-[(5-phosphoribosylamino)methylideneamino] imidazole-4-carboxamide isomerase from Nocardioides sp. (strain ATCC BAA-499 / JS614).